The chain runs to 285 residues: Probable cobalamin biosynthesis protein CobD (285 aa).

Helical transmembrane passes span 10–32 (LIDL…GKVI), 45–67 (YLDF…ILSH), 145–167 (VIAP…RAVN), and 266–283 (VYWI…IILY).

This sequence belongs to the CobD/CbiB family.

It is found in the cell membrane. It participates in cofactor biosynthesis; adenosylcobalamin biosynthesis. Its function is as follows. Converts cobyric acid to cobinamide by the addition of aminopropanol on the F carboxylic group. This chain is Probable cobalamin biosynthesis protein CobD, found in Pyrococcus furiosus (strain ATCC 43587 / DSM 3638 / JCM 8422 / Vc1).